The sequence spans 628 residues: Probable potassium transport system protein Kup (628 aa).

12 helical membrane passes run 12 to 32 (ALPLAAEIGALGVVFGDIGTS), 57 to 77 (LLSLITWSIILSVTVKYVMLV), 106 to 126 (WYLLAAGLVGAAMLIGDGVLT), 141 to 161 (ISPALLDWIVPLTVLVLAAVF), 174 to 194 (FYGPIMVLWFGSLAVLGVYGI), 219 to 239 (LAGVIIGACFLAITGGEALYA), 253 to 273 (WLFVAMPALLLNYFGQGAILL), 295 to 315 (LLFLATAATVIASQSIITGVF), 343 to 363 (IYVGRLNWLLMVACIAVVLGF), 369 to 389 (LASAYGIAVAFAMVTTSILFV), 402 to 422 (AVIALGIGLFSLDAAFASANL), and 425 to 445 (LHEGGWLPLTIAGIVIFVMVS).

The protein belongs to the HAK/KUP transporter (TC 2.A.72) family.

It localises to the cell inner membrane. It carries out the reaction K(+)(in) + H(+)(in) = K(+)(out) + H(+)(out). In terms of biological role, transport of potassium into the cell. Likely operates as a K(+):H(+) symporter. The polypeptide is Probable potassium transport system protein Kup (Azorhizobium caulinodans (strain ATCC 43989 / DSM 5975 / JCM 20966 / LMG 6465 / NBRC 14845 / NCIMB 13405 / ORS 571)).